We begin with the raw amino-acid sequence, 392 residues long: 4-hydroxy-3-methylbut-2-en-1-yl diphosphate synthase (flavodoxin) (392 aa).

Residues Cys-280, Cys-283, Cys-315, and Glu-322 each coordinate [4Fe-4S] cluster. Over residues 371-380 (TEKGSDHCSE) the composition is skewed to basic and acidic residues. A disordered region spans residues 371 to 392 (TEKGSDHCSETTRSGSPVVTVN). A compositionally biased stretch (polar residues) spans 381-392 (TTRSGSPVVTVN).

The protein belongs to the IspG family. It depends on [4Fe-4S] cluster as a cofactor.

The enzyme catalyses (2E)-4-hydroxy-3-methylbut-2-enyl diphosphate + oxidized [flavodoxin] + H2O + 2 H(+) = 2-C-methyl-D-erythritol 2,4-cyclic diphosphate + reduced [flavodoxin]. The protein operates within isoprenoid biosynthesis; isopentenyl diphosphate biosynthesis via DXP pathway; isopentenyl diphosphate from 1-deoxy-D-xylulose 5-phosphate: step 5/6. Its function is as follows. Converts 2C-methyl-D-erythritol 2,4-cyclodiphosphate (ME-2,4cPP) into 1-hydroxy-2-methyl-2-(E)-butenyl 4-diphosphate. This Mycobacterium leprae (strain Br4923) protein is 4-hydroxy-3-methylbut-2-en-1-yl diphosphate synthase (flavodoxin).